Reading from the N-terminus, the 720-residue chain is Methionine--tRNA ligase (720 aa).

A 'HIGH' region motif is present at residues 27–37; it reads PYANGQIHIGH. Zn(2+) contacts are provided by cysteine 158, cysteine 161, cysteine 171, and cysteine 174. A 'KMSKS' region motif is present at residues 348 to 352; that stretch reads KMSKS. Lysine 351 lines the ATP pocket. In terms of domain architecture, tRNA-binding spans 614–720; sequence DFAKVDLRIA…SGAKPGMRVK (107 aa).

Belongs to the class-I aminoacyl-tRNA synthetase family. MetG type 1 subfamily. As to quaternary structure, homodimer. Zn(2+) serves as cofactor.

It localises to the cytoplasm. The catalysed reaction is tRNA(Met) + L-methionine + ATP = L-methionyl-tRNA(Met) + AMP + diphosphate. In terms of biological role, is required not only for elongation of protein synthesis but also for the initiation of all mRNA translation through initiator tRNA(fMet) aminoacylation. The polypeptide is Methionine--tRNA ligase (Burkholderia ambifaria (strain ATCC BAA-244 / DSM 16087 / CCUG 44356 / LMG 19182 / AMMD) (Burkholderia cepacia (strain AMMD))).